We begin with the raw amino-acid sequence, 215 residues long: Cytochrome c biogenesis ATP-binding export protein CcmA (215 aa).

The ABC transporter domain occupies 12 to 215 (LAAHALTYSR…TRLLHLQKAP (204 aa)). 44-51 (GPNGIGKT) contacts ATP.

It belongs to the ABC transporter superfamily. CcmA exporter (TC 3.A.1.107) family. As to quaternary structure, the complex is composed of two ATP-binding proteins (CcmA) and two transmembrane proteins (CcmB).

The protein resides in the cell inner membrane. The enzyme catalyses heme b(in) + ATP + H2O = heme b(out) + ADP + phosphate + H(+). Its function is as follows. Part of the ABC transporter complex CcmAB involved in the biogenesis of c-type cytochromes; once thought to export heme, this seems not to be the case, but its exact role is uncertain. Responsible for energy coupling to the transport system. This chain is Cytochrome c biogenesis ATP-binding export protein CcmA, found in Xylella fastidiosa (strain Temecula1 / ATCC 700964).